Reading from the N-terminus, the 196-residue chain is Nucleoid occlusion factor SlmA (196 aa).

Residues 7-68 (TNRREEILQA…GLIEFIEDSI (62 aa)) form the HTH tetR-type domain. The H-T-H motif DNA-binding region spans 31–50 (TTAKLAAQVGVSEAALYRHF). A coiled-coil region spans residues 115 to 142 (EQDRLQSRINQLFERIETQLRQVLRERK).

It belongs to the nucleoid occlusion factor SlmA family. In terms of assembly, homodimer. Interacts with FtsZ.

The protein resides in the cytoplasm. It is found in the nucleoid. Its function is as follows. Required for nucleoid occlusion (NO) phenomenon, which prevents Z-ring formation and cell division over the nucleoid. Acts as a DNA-associated cell division inhibitor that binds simultaneously chromosomal DNA and FtsZ, and disrupts the assembly of FtsZ polymers. SlmA-DNA-binding sequences (SBS) are dispersed on non-Ter regions of the chromosome, preventing FtsZ polymerization at these regions. The polypeptide is Nucleoid occlusion factor SlmA (Photobacterium profundum (strain SS9)).